Here is a 111-residue protein sequence, read N- to C-terminus: uncharacterized protein (111 aa).

The HIT domain maps to 8 to 111; it reads LFLKIIKREE…HVHIIPYYKK (104 aa). A Histidine triad motif motif is present at residues 100-104; it reads HTHVH.

This is an uncharacterized protein from Mesomycoplasma hyorhinis (Mycoplasma hyorhinis).